The chain runs to 314 residues: ATP synthase gamma chain (314 aa).

This sequence belongs to the ATPase gamma chain family. As to quaternary structure, F-type ATPases have 2 components, CF(1) - the catalytic core - and CF(0) - the membrane proton channel. CF(1) has five subunits: alpha(3), beta(3), gamma(1), delta(1), epsilon(1). CF(0) has three main subunits: a, b and c.

Its subcellular location is the cell membrane. Functionally, produces ATP from ADP in the presence of a proton gradient across the membrane. The gamma chain is believed to be important in regulating ATPase activity and the flow of protons through the CF(0) complex. The sequence is that of ATP synthase gamma chain from Cutibacterium acnes (strain DSM 16379 / KPA171202) (Propionibacterium acnes).